Consider the following 231-residue polypeptide: MPENLAKAIANPLFPALDSLLRAGRHVSSDDLDNHAFLSDFEPDLALFYQRYHTELVRAPEGFFYLRPRSTSLINRSVLSELDMLVGKVLCFLYLSPERLAHEGIFTNQELYDELLTLVEEKKLMKLVTNRASGSDLDREKLFEKVRTSLRRLRRLGMVITIGDTGKFRITEAVFRFGADVRLGGDVREAQLRLIRDGEAVVHTPEPSQQSLLENPTAEYDEEQTEWEDEA.

Positions 204–231 are disordered; it reads TPEPSQQSLLENPTAEYDEEQTEWEDEA. Positions 219 to 231 are enriched in acidic residues; it reads EYDEEQTEWEDEA.

Belongs to the MukE family. Interacts, and probably forms a ternary complex, with MukF and MukB. The complex formation is stimulated by calcium or magnesium.

It is found in the cytoplasm. The protein localises to the nucleoid. Involved in chromosome condensation, segregation and cell cycle progression. May participate in facilitating chromosome segregation by condensation DNA from both sides of a centrally located replisome during cell division. Probably acts via its interaction with MukB and MukF. This Vibrio cholerae serotype O1 (strain ATCC 39315 / El Tor Inaba N16961) protein is Chromosome partition protein MukE.